A 94-amino-acid polypeptide reads, in one-letter code: Cell division protein FtsB (94 aa).

Over 1 to 3 (MRV) the chain is Cytoplasmic. A helical transmembrane segment spans residues 4–21 (FALTLSLLLVWLLYTLMW). The Periplasmic portion of the chain corresponds to 22 to 94 (GKNGVMDFRA…YRIIGEESRQ (73 aa)). The stretch at 33-76 (QAEIEVQQQVNANLHLRNQEMFAEIDDLRQGLDAIEERARNELG) forms a coiled coil.

This sequence belongs to the FtsB family. In terms of assembly, part of a complex composed of FtsB, FtsL and FtsQ.

The protein localises to the cell inner membrane. Essential cell division protein. May link together the upstream cell division proteins, which are predominantly cytoplasmic, with the downstream cell division proteins, which are predominantly periplasmic. In Vibrio cholerae serotype O1 (strain ATCC 39315 / El Tor Inaba N16961), this protein is Cell division protein FtsB.